Reading from the N-terminus, the 278-residue chain is MDKSGIDSLDHVTSDAVELANRSDNSSDSRLFKTQCIPYSPKREKRNPIRKFVRTPESVHASDSSSDSSFEPIPLTMKAIFERFKNRKKRYKKKKKKRYQPTGRPRGRPEGRRNPIYSLIDKKKQFRSRGSGFPFLESENEKNPPWRKILTFEQAVARGFFNYIEKLKYEHHLKESLKQMNVGEDLENEDFDSRRYKFLDDDGSISPIEESTAEDEDATHLEDNECDIKLAGDSFIVSSEFPVRLSVYLEEEDITEEAALSKKRATKAKNTGQRGLKM.

Disordered stretches follow at residues 19–71 (LANR…SSFE) and 88–115 (KKRYKKKKKKRYQPTGRPRGRPEGRRNP). S23 carries the post-translational modification Phosphoserine. 2 stretches are compositionally biased toward basic residues: residues 43-53 (REKRNPIRKFV) and 88-99 (KKRYKKKKKKRY). Residues S138 and S234 each carry the phosphoserine modification.

As to quaternary structure, component of the transcription factor SL1/TIF-IB complex, composed of TBP and at least TAF1A, TAF1B, TAF1C and TAF1D. Interacts with UBTF.

The protein resides in the nucleus. Component of the transcription factor SL1/TIF-IB complex, which is involved in the assembly of the PIC (preinitiation complex) during RNA polymerase I-dependent transcription. The rate of PIC formation probably is primarily dependent on the rate of association of SL1/TIF-IB with the rDNA promoter. SL1/TIF-IB is involved in stabilization of nucleolar transcription factor 1/UBTF on rDNA. Formation of SL1/TIF-IB excludes the association of TBP with TFIID subunits. The polypeptide is TATA box-binding protein-associated factor RNA polymerase I subunit D (TAF1D) (Pongo abelii (Sumatran orangutan)).